A 161-amino-acid chain; its full sequence is MTESKAVIPGSFDPITYGHMDIIERVAQRFDEIHICVLKNSNKEGTFTVEERMALIEASVADIPNVEVHQFNGLLVDFCDEVGAKTIIRGLRAVSDFEYELRLTSMNKKLNSDVETLYMMTSTNYSFISSSVVKEVAQYKADISEFVPEPVEKALKEKFGK.

Ser-11 contacts substrate. Residues 11 to 12 (SF) and His-19 contribute to the ATP site. The substrate site is built by Lys-43, Leu-75, and Arg-89. ATP is bound by residues 90 to 92 (GLR), Glu-100, and 125 to 131 (YSFISSS).

It belongs to the bacterial CoaD family. In terms of assembly, homohexamer. Requires Mg(2+) as cofactor.

It localises to the cytoplasm. The enzyme catalyses (R)-4'-phosphopantetheine + ATP + H(+) = 3'-dephospho-CoA + diphosphate. It functions in the pathway cofactor biosynthesis; coenzyme A biosynthesis; CoA from (R)-pantothenate: step 4/5. Functionally, reversibly transfers an adenylyl group from ATP to 4'-phosphopantetheine, yielding dephospho-CoA (dPCoA) and pyrophosphate. In Staphylococcus carnosus (strain TM300), this protein is Phosphopantetheine adenylyltransferase.